Consider the following 1741-residue polypeptide: DNA-directed RNA polymerase III subunit RPC1 (1741 aa).

Zn(2+) contacts are provided by Cys79, Cys82, Cys89, His92, Cys119, Cys122, and Cys160. Asp722, Asp724, and Asp726 together coordinate Mg(2+). A bridging helix region spans residues 1099-1111; the sequence is PFEFLAHARAGRD. A disordered region spans residues 1719-1741; it reads RHANKRSWSRGKERHASLKPKNR.

The protein belongs to the RNA polymerase beta' chain family. Component of the RNA polymerase III (Pol III) complex consisting of 17 subunits.

Its subcellular location is the nucleus. The catalysed reaction is RNA(n) + a ribonucleoside 5'-triphosphate = RNA(n+1) + diphosphate. DNA-dependent RNA polymerase catalyzes the transcription of DNA into RNA using the four ribonucleoside triphosphates as substrates. Largest and catalytic core component of RNA polymerase III which synthesizes small RNAs, such as 5S rRNA and tRNAs. Forms the polymerase active center together with the second largest subunit. A single-stranded DNA template strand of the promoter is positioned within the central active site cleft of Pol III. A bridging helix emanates from RPC1 and crosses the cleft near the catalytic site and is thought to promote translocation of Pol III by acting as a ratchet that moves the RNA-DNA hybrid through the active site by switching from straight to bent conformations at each step of nucleotide addition. In Giardia intestinalis (Giardia lamblia), this protein is DNA-directed RNA polymerase III subunit RPC1 (RPOA3).